Consider the following 311-residue polypeptide: MKVAVIGAAGGIGQALALLLKNRLPAGSDLALYDIAPVTPGVAADLSHIPTPVSIKGYAGEDPTPALEGADVVLISAGVARKPGMDRADLFNVNAGIVKSLAEKIAVTCPTACVGIITNPVNTTVPIAAEVLKKAGVYDKRRLFGITTLDVIRSETFVAELKDKDPGDIRVPVIGGHSGVTILPLLSQVEGVEFTDEEIAALTTRIQNAGTEVVEAKAGGGSATLSMGQAACRFGLALVKALQGEENVIECAYVEGEGEHAPFFAQPVKLGKEGAEAILSYGELSDFERNALDSMLETLNGDIEIGVEFAK.

Residues 7 to 13 (GAAGGIG) and Asp34 contribute to the NAD(+) site. 2 residues coordinate substrate: Arg81 and Arg87. NAD(+) is bound by residues Asn94 and 117–119 (ITN). Asn119 and Arg153 together coordinate substrate. Catalysis depends on His177, which acts as the Proton acceptor. Met227 provides a ligand contact to NAD(+).

It belongs to the LDH/MDH superfamily. MDH type 1 family. As to quaternary structure, homodimer.

The catalysed reaction is (S)-malate + NAD(+) = oxaloacetate + NADH + H(+). Catalyzes the reversible oxidation of malate to oxaloacetate. The sequence is that of Malate dehydrogenase from Vibrio atlanticus (strain LGP32) (Vibrio splendidus (strain Mel32)).